The following is a 184-amino-acid chain: Ribosome-recycling factor (184 aa).

It belongs to the RRF family.

It localises to the cytoplasm. In terms of biological role, responsible for the release of ribosomes from messenger RNA at the termination of protein biosynthesis. May increase the efficiency of translation by recycling ribosomes from one round of translation to another. The polypeptide is Ribosome-recycling factor (Hyphomonas neptunium (strain ATCC 15444)).